Reading from the N-terminus, the 1113-residue chain is Cytospin-A (1113 aa).

Residues 1 to 160 are disordered; that stretch reads MKKSVRPAAS…KSKSDGQISD (160 aa). Over residues 59-103 the composition is skewed to polar residues; that stretch reads ASCNAVSKSKRTTSVGTTASTLDSKPKTASGTTSKRLASSLSKET. Residues 145–154 are compositionally biased toward basic and acidic residues; sequence SEGRMSKSKS. Positions 220-259 form a coiled coil; sequence AADVESTLILLQEQNQAIREELNLLKSENRMLKDRLNALG. Residues 284–374 are disordered; the sequence is AGSGQSDGGG…RRGSSGNASE (91 aa). Low complexity predominate over residues 338-358; it reads SSDDALDAPSGASSSSESECA. Coiled-coil stretches lie at residues 379 to 433 and 473 to 791; these read CLTE…MDSL and MELE…RGRV. Disordered regions lie at residues 766 to 785, 832 to 902, 914 to 957, and 972 to 997; these read QEKNEKLSKELEEVKSRKQD, FDSA…PTYP, GSAA…DGAS, and ALASSSPTASVTPTTRSRLREERKDP. Residues 834 to 845 show a composition bias toward low complexity; the sequence is SASQGPPSSGAS. A compositionally biased stretch (pro residues) spans 856–867; sequence PRTPLSPSPMKT. Positions 925–940 are enriched in polar residues; the sequence is QRVSNMDSTKAISVSR. Basic and acidic residues predominate over residues 941-951; it reads RSSEEMKRDMA. Over residues 972–981 the composition is skewed to low complexity; it reads ALASSSPTAS. The region spanning 1007-1112 is the Calponin-homology (CH) domain; that stretch reads GSKRNALLKW…YVTAIYKYFE (106 aa).

This sequence belongs to the cytospin-A family. In terms of assembly, may interact with both microtubules and actin cytoskeleton.

It localises to the cytoplasm. The protein resides in the cytoskeleton. Its subcellular location is the spindle. It is found in the cell junction. The protein localises to the gap junction. Its function is as follows. Involved in cytokinesis and spindle organization. May play a role in actin cytoskeleton organization and microtubule stabilization and hence required for proper cell adhesion and migration. This Tetraodon nigroviridis (Spotted green pufferfish) protein is Cytospin-A (specc1l).